We begin with the raw amino-acid sequence, 696 residues long: UvrABC system protein C (696 aa).

In terms of domain architecture, GIY-YIG spans 16-95 (TEPGVYKFRD…IKRFDPRFNV (80 aa)). Positions 208–243 (DKVTRKLNADMMAAAEELDFERAARLRDDLEAIDKV) constitute a UVR domain.

Belongs to the UvrC family. As to quaternary structure, interacts with UvrB in an incision complex.

The protein resides in the cytoplasm. Its function is as follows. The UvrABC repair system catalyzes the recognition and processing of DNA lesions. UvrC both incises the 5' and 3' sides of the lesion. The N-terminal half is responsible for the 3' incision and the C-terminal half is responsible for the 5' incision. This Corynebacterium glutamicum (strain R) protein is UvrABC system protein C.